We begin with the raw amino-acid sequence, 473 residues long: Cysteine--tRNA ligase (473 aa).

Cysteine 30 is a binding site for Zn(2+). Positions methionine 32 to histidine 42 match the 'HIGH' region motif. Cysteine 213, histidine 238, and glutamate 242 together coordinate Zn(2+). Positions lysine 270–serine 274 match the 'KMSKS' region motif. ATP is bound at residue lysine 273.

The protein belongs to the class-I aminoacyl-tRNA synthetase family. Monomer. Requires Zn(2+) as cofactor.

The protein localises to the cytoplasm. The catalysed reaction is tRNA(Cys) + L-cysteine + ATP = L-cysteinyl-tRNA(Cys) + AMP + diphosphate. This Acinetobacter baumannii (strain SDF) protein is Cysteine--tRNA ligase.